The chain runs to 255 residues: MPSAVESPADAILNHSATSYNFRFSPFLRQTYQVGLSPDRPVCKAFQSGHCPNGTRCPERHVSDSKTSQPTGGLNSLVCKHWLRGLCKKGEHCEFLHEYNLRKMPECNFFMRNGYCSNGDECLYLHIDPQSRLPPCPHYDMGFCPLGPNCSKKHVRRKLCVFYLAGFCPDGPDCKEGAHPKWSKDLEKPTLKSEEKKDEEMRVEFSQDDMDRQRDQQRDRDRDDGGRHRGGHGGHGGHGGRGKWRGRGRYRARGH.

5 consecutive C3H1-type zinc fingers follow at residues Ser37 to Asp64, Gly73 to Asn100, Leu101 to Pro129, Gln130 to Arg157, and Leu159 to Trp182. Over residues His179–Arg227 the composition is skewed to basic and acidic residues. Residues His179–His255 form a disordered region. Residues His238–His255 show a composition bias toward basic residues.

Belongs to the CPSF4/YTH1 family.

It localises to the nucleus. In terms of biological role, component of the cleavage factor I (CF I) involved in pre-mRNA 3'-end processing. In Gibberella zeae (strain ATCC MYA-4620 / CBS 123657 / FGSC 9075 / NRRL 31084 / PH-1) (Wheat head blight fungus), this protein is mRNA 3'-end-processing protein YTH1 (YTH1).